We begin with the raw amino-acid sequence, 361 residues long: Glutamate 5-kinase (361 aa).

K7 lines the ATP pocket. Positions 47, 134, and 146 each coordinate substrate. ATP contacts are provided by residues 166 to 167 and 209 to 215; these read TD and TGGMTTK. Positions 274 to 345 constitute a PUA domain; sequence LGTLQLDEGA…EAIETQMSTN (72 aa).

This sequence belongs to the glutamate 5-kinase family.

The protein localises to the cytoplasm. The catalysed reaction is L-glutamate + ATP = L-glutamyl 5-phosphate + ADP. It participates in amino-acid biosynthesis; L-proline biosynthesis; L-glutamate 5-semialdehyde from L-glutamate: step 1/2. Catalyzes the transfer of a phosphate group to glutamate to form L-glutamate 5-phosphate. This Prochlorococcus marinus (strain MIT 9313) protein is Glutamate 5-kinase.